Reading from the N-terminus, the 209-residue chain is Peptide methionine sulfoxide reductase MsrA (209 aa).

The active site involves Cys-14. A disordered region spans residues 183 to 209; the sequence is FSALTTGGNQPGARGGLTNNTCQHPRH. A compositionally biased stretch (polar residues) spans 199-209; that stretch reads LTNNTCQHPRH.

The protein belongs to the MsrA Met sulfoxide reductase family.

It catalyses the reaction L-methionyl-[protein] + [thioredoxin]-disulfide + H2O = L-methionyl-(S)-S-oxide-[protein] + [thioredoxin]-dithiol. The catalysed reaction is [thioredoxin]-disulfide + L-methionine + H2O = L-methionine (S)-S-oxide + [thioredoxin]-dithiol. In terms of biological role, has an important function as a repair enzyme for proteins that have been inactivated by oxidation. Catalyzes the reversible oxidation-reduction of methionine sulfoxide in proteins to methionine. This chain is Peptide methionine sulfoxide reductase MsrA, found in Pseudomonas fluorescens.